The chain runs to 879 residues: DNA double-strand break repair Rad50 ATPase (879 aa).

ATP is bound by residues 32–38 and glutamine 139; that span reads NGAGKSS. Coiled-coil stretches lie at residues 184–304 and 342–436; these read IELQ…NKIK and EIKG…NQVK. The region spanning 394–492 is the Zinc-hook domain; it reads LQKLNEDLNN…LISELNQIIN (99 aa). Residues cysteine 440 and cysteine 443 each contribute to the Zn(2+) site. Residues 502-722 adopt a coiled-coil conformation; sequence IRNLADYNNL…LITAYDKLKK (221 aa). 786-791 is an ATP binding site; that stretch reads LLSGGE.

Belongs to the SMC family. RAD50 subfamily. Homodimer. Forms a heterotetramer composed of two Mre11 subunits and two Rad50 subunits. Zn(2+) is required as a cofactor.

Functionally, part of the Rad50/Mre11 complex, which is involved in the early steps of DNA double-strand break (DSB) repair. The complex may facilitate opening of the processed DNA ends to aid in the recruitment of HerA and NurA. Rad50 controls the balance between DNA end bridging and DNA resection via ATP-dependent structural rearrangements of the Rad50/Mre11 complex. The polypeptide is DNA double-strand break repair Rad50 ATPase (Sulfurisphaera tokodaii (strain DSM 16993 / JCM 10545 / NBRC 100140 / 7) (Sulfolobus tokodaii)).